We begin with the raw amino-acid sequence, 551 residues long: DNA double-strand break repair helicase HerA (551 aa).

Residues Arg-152, 161-166, and 507-508 contribute to the ATP site; these read GAGKSN and RI.

This sequence belongs to the HerA family. As to quaternary structure, homohexamer. Interacts with NurA.

The enzyme catalyses Couples ATP hydrolysis with the unwinding of duplex DNA at the replication fork by translocating in the 5'-3' direction. This creates two antiparallel DNA single strands (ssDNA). The leading ssDNA polymer is the template for DNA polymerase III holoenzyme which synthesizes a continuous strand.. It catalyses the reaction ATP + H2O = ADP + phosphate + H(+). The catalysed reaction is Couples ATP hydrolysis with the unwinding of duplex DNA by translocating in the 3'-5' direction.. Its activity is regulated as follows. Helicase activity is stimulated in the presence of NurA. Involved in DNA double-strand break (DSB) repair. Probably acts with NurA to stimulate resection of the 5' strand and produce the long 3' single-strand that is required for RadA loading. Has DNA-dependent ATPase activity and DNA helicase activity. The polypeptide is DNA double-strand break repair helicase HerA (Pyrococcus furiosus (strain ATCC 43587 / DSM 3638 / JCM 8422 / Vc1)).